Consider the following 266-residue polypeptide: Apolipoprotein A-I (266 aa).

The N-terminal stretch at 1-18 is a signal peptide; it reads MKAVVLTLAVLFLTGSQA. 2 repeat units span residues 67 to 88 and 89 to 110. The interval 67 to 266 is 10 X approximate tandem repeats; sequence LKLLDNWDSL…EEASKKLNAQ (200 aa). Met109 carries the methionine sulfoxide modification. The stretch at 111-121 is one 3; half-length repeat; sequence KDVEEMKTKVQ. 5 consecutive repeat copies span residues 122–143, 144–165, 166–187, 188–209, and 210–231. A 9; half-length repeat occupies 232–242; that stretch reads PALEDLRQGLL. Repeat unit 10 spans residues 243 to 266; it reads PVLESFKVSLLSALEEASKKLNAQ.

It belongs to the apolipoprotein A1/A4/E family. In terms of assembly, homodimer. Interacts with APOA1BP and CLU. Component of a sperm activating protein complex (SPAP), consisting of APOA1, an immunoglobulin heavy chain, an immunoglobulin light chain and albumin. Interacts with NDRG1. Interacts with SCGB3A2. Interacts with NAXE and YJEFN3. In terms of processing, glycosylated. Palmitoylated. Post-translationally, phosphorylation sites are present in the extracellular medium. As to expression, major protein of plasma HDL, also found in chylomicrons.

It is found in the secreted. Participates in the reverse transport of cholesterol from tissues to the liver for excretion by promoting cholesterol efflux from tissues and by acting as a cofactor for the lecithin cholesterol acyltransferase (LCAT). As part of the SPAP complex, activates spermatozoa motility. This Carlito syrichta (Philippine tarsier) protein is Apolipoprotein A-I (APOA1).